Consider the following 465-residue polypeptide: Polyadenylation factor subunit 2 (465 aa).

Over residues 1–20 (MDGHNQNQYQNQNQIQQSQQ) the composition is skewed to low complexity. The disordered stretch occupies residues 1–26 (MDGHNQNQYQNQNQIQQSQQPPLKKY). WD repeat units lie at residues 133–163 (AHDS…KIWQ), 175–205 (AHTE…KIWN), 217–247 (GHHW…KLWD), 259–290 (KFKH…RVFD), and 348–378 (AHDK…RFWT). Positions 417-465 (EFGAAPPPPATLEPHALPNMNGFINKKPRQEIPGIDSNIKSSTLPGLSI) are disordered. Over residues 454–465 (NIKSSTLPGLSI) the composition is skewed to polar residues.

Component of the cleavage and polyadenylation factor (CPF) complex, which is composed of at least PTI1, SYC1, SSU72, GLC7, MPE1, REF2, PFS2, PTA1, YSH1/BRR5, SWD2, CFT2/YDH1, YTH1, CFT1/YHH1, FIP1 and PAP1. Interacts with YSH1/BRR5, FIP1 and RNA14.

It is found in the nucleus. In terms of biological role, integral and essential component of the cleavage and polyadenylation factor (CPF) complex, which plays a key role in polyadenylation-dependent pre-mRNA 3'-end formation and cooperates with cleavage factors including the CFIA complex and NAB4/CFIB. May bridge the CPF and CFIA complexes. The polypeptide is Polyadenylation factor subunit 2 (PFS2) (Saccharomyces cerevisiae (strain ATCC 204508 / S288c) (Baker's yeast)).